The following is a 362-amino-acid chain: Putative gustatory receptor 89a (362 aa).

Residues 1 to 38 are Cytoplasmic-facing; sequence MLRFPHVCGLCLLLKYWQILALAPFRTSEPMVARCQRW. A helical membrane pass occupies residues 39-59; that stretch reads MTLIAVFRWLLLTSMAPFVLW. Residues 60–74 lie on the Extracellular side of the membrane; sequence KSAAMYEATNVRHSM. The helical transmembrane segment at 75–95 threads the bilayer; the sequence is VFKTIALATMTGDVCISLALL. Topologically, residues 96-126 are cytoplasmic; the sequence is GNHLWNRRELANLVNDLARLHRRRRLSWWST. The chain crosses the membrane as a helical span at residues 127–147; it reads LFLWLKLLLSLYDLLCSVPFL. Topologically, residues 148-166 are extracellular; it reads KGAGGRLPWSQLVAYGVQL. The helical transmembrane segment at 167–187 threads the bilayer; that stretch reads YFQHVASVYGNGIFGGILLML. Residues 188–223 lie on the Cytoplasmic side of the membrane; that stretch reads ECYNQLEREEPTNLARLLQKEYSWLRLIQRFVKLFQ. The chain crosses the membrane as a helical span at residues 224–244; the sequence is LGIFLLVLGSFVNIMVNIYAF. At 245-255 the chain is on the extracellular side; it reads MSYYVSLHGVP. Residues 256–276 form a helical membrane-spanning segment; sequence LTISNNCLVLAIQLYAVILAA. Topologically, residues 277-333 are cytoplasmic; the sequence is HLCQVRSAKLRKKCLQLEYVPEGLTQEQAMASTPFPVLTPTGNVKFRILGVFILDNS. Residues 334-354 form a helical membrane-spanning segment; it reads FWLFLVSYAMNFIVVILQTSF. Residues 355–362 are Extracellular-facing; the sequence is EHINHGEI.

Belongs to the insect chemoreceptor superfamily. Gustatory receptor (GR) family. Gr77a subfamily.

It is found in the cell membrane. Functionally, probable gustatory receptor which mediates acceptance or avoidance behavior, depending on its substrates. This chain is Putative gustatory receptor 89a (Gr89a), found in Drosophila melanogaster (Fruit fly).